We begin with the raw amino-acid sequence, 306 residues long: Aspartate carbamoyltransferase catalytic subunit (306 aa).

Carbamoyl phosphate is bound by residues Arg55 and Thr56. Lys84 is a binding site for L-aspartate. Arg105, His133, and Gln136 together coordinate carbamoyl phosphate. Residues Arg166 and Arg227 each coordinate L-aspartate. 2 residues coordinate carbamoyl phosphate: Leu265 and Pro266.

This sequence belongs to the aspartate/ornithine carbamoyltransferase superfamily. ATCase family. In terms of assembly, heterododecamer (2C3:3R2) of six catalytic PyrB chains organized as two trimers (C3), and six regulatory PyrI chains organized as three dimers (R2).

The catalysed reaction is carbamoyl phosphate + L-aspartate = N-carbamoyl-L-aspartate + phosphate + H(+). It functions in the pathway pyrimidine metabolism; UMP biosynthesis via de novo pathway; (S)-dihydroorotate from bicarbonate: step 2/3. In terms of biological role, catalyzes the condensation of carbamoyl phosphate and aspartate to form carbamoyl aspartate and inorganic phosphate, the committed step in the de novo pyrimidine nucleotide biosynthesis pathway. This chain is Aspartate carbamoyltransferase catalytic subunit, found in Neisseria meningitidis serogroup A / serotype 4A (strain DSM 15465 / Z2491).